Reading from the N-terminus, the 494-residue chain is Caspase-8 (494 aa).

The propeptide occupies 1–242 (MAGSNLLIHL…QEIESDNQQS (242 aa)). Residues histidine 345 and cysteine 386 contribute to the active site. Positions 401 to 410 (RIDVTTVSPD) are excised as a propeptide.

This sequence belongs to the peptidase C14A family. Heterotetramer that consists of two anti-parallel arranged heterodimers, each one formed by a 15 kDa (caspase-8 subunit p15) and a 10 kDa (caspase-8 subunit p10) subunit. Interacts (via N-terminus) with Diap2; likely to bind Diap2 simultaneously with Fadd to form a trimeric complex. Interacts with Dark (via N-terminus). In terms of processing, polyubiquitinated by Diap2 following activation of the immune deficiency (Imd) pathway. As to expression, constitutively expressed in fat bodies of larvae and adults.

The protein resides in the cytoplasm. The enzyme catalyses Strict requirement for Asp at position P1 and has a preferred cleavage sequence of (Leu/Asp/Val)-Glu-Thr-Asp-|-(Gly/Ser/Ala).. Functionally, effector of the programmed cell death (PCD) activators rpr, grim and hid. May play an apoptotic role in the germline as well as soma. Fadd interacts with Dredd to promote cleavage of Dredd and is necessary and sufficient for enhancing Dredd-induced apoptosis. Plays a role in the innate immune response. Required for resistance to Gram-negative bacterial infection. Diap2-mediated ubiquitination of Dredd is critical for processing of imd and rel and the subsequent expression of antimicrobial genes such as DptA. This is Caspase-8 from Drosophila melanogaster (Fruit fly).